The chain runs to 314 residues: Polyadenylate-binding protein-interacting protein 8 (314 aa).

The tract at residues 1-47 (MAAITEMATDSNDVINDGGTGDGIEKSTDSKPEIESDDLKPKSKPEY) is disordered. A compositionally biased stretch (basic and acidic residues) spans 23 to 47 (GIEKSTDSKPEIESDDLKPKSKPEY). Positions 59-69 (KLNPEAKEFFP) match the PAM2-like motif. The Bipartite nuclear localization signal signature appears at 99 to 112 (RRRRNNYNQGRRVR). RRM domains lie at 128–203 (RTVY…PSKT) and 225–301 (RTIY…PSKT).

As to quaternary structure, interacts with MPC. In terms of tissue distribution, expressed in cauline leaves, stems, rosette leaves, immature siliques and primary inflorescences but at a low level.

It is found in the nucleus. This Arabidopsis thaliana (Mouse-ear cress) protein is Polyadenylate-binding protein-interacting protein 8 (CID8).